The sequence spans 124 residues: MADSSPEVKAVARYIRMSPFKVRRVLDQIRGRTYADALILLEFMPYAACEPVRKVLRSAVANAEHNNGLDPRDLVISQAYADQGPVLKRFRPRAQGRAYPIRKRTCHITIAVRPIEEAEAATAS.

Belongs to the universal ribosomal protein uL22 family. In terms of assembly, part of the 50S ribosomal subunit.

In terms of biological role, this protein binds specifically to 23S rRNA; its binding is stimulated by other ribosomal proteins, e.g. L4, L17, and L20. It is important during the early stages of 50S assembly. It makes multiple contacts with different domains of the 23S rRNA in the assembled 50S subunit and ribosome. The globular domain of the protein is located near the polypeptide exit tunnel on the outside of the subunit, while an extended beta-hairpin is found that lines the wall of the exit tunnel in the center of the 70S ribosome. This Synechococcus sp. (strain JA-2-3B'a(2-13)) (Cyanobacteria bacterium Yellowstone B-Prime) protein is Large ribosomal subunit protein uL22.